The chain runs to 131 residues: Small ribosomal subunit protein uS11 (131 aa).

Belongs to the universal ribosomal protein uS11 family. As to quaternary structure, part of the 30S ribosomal subunit. Interacts with proteins S7 and S18. Binds to IF-3.

In terms of biological role, located on the platform of the 30S subunit, it bridges several disparate RNA helices of the 16S rRNA. Forms part of the Shine-Dalgarno cleft in the 70S ribosome. The polypeptide is Small ribosomal subunit protein uS11 (Bacillus licheniformis (strain ATCC 14580 / DSM 13 / JCM 2505 / CCUG 7422 / NBRC 12200 / NCIMB 9375 / NCTC 10341 / NRRL NRS-1264 / Gibson 46)).